A 306-amino-acid polypeptide reads, in one-letter code: MPETGQESSNPPAKESPFSIKSLLTCEPSRAARPPKALFTPIKGALDGAAFAFSPLTDFTFPRLEIPTQRFALPAHYLERSPGWWYSYTLAHGGHTPRTEVPDKSLLLGPTSPVSGGERDSPDPIHPLKTELGAKESESKSPEEIILEESDPEEGKKDDSGEDWKKREDSPDKKPCRKKKTRTVFSRSQVFQLESTFDMKRYLSSSERAGLAASLHLTETQVKIWFQNRRNKWKRQLAAELEAANLSHAAAQRIVRVPILYHENSSSAESASSAANVPVSQPLLTFPHPVYYSHPVVTSVPLLRPV.

The disordered stretch occupies residues 95 to 181 (HTPRTEVPDK…DKKPCRKKKT (87 aa)). Composition is skewed to basic and acidic residues over residues 117-143 (GERD…KSPE) and 153-174 (EEGK…PDKK). A DNA-binding region (homeobox) is located at residues 178–237 (KKKTRTVFSRSQVFQLESTFDMKRYLSSSERAGLAASLHLTETQVKIWFQNRRNKWKRQL).

It belongs to the HMX homeobox family.

The protein localises to the nucleus. Functionally, transcription factor involved in specification of neuronal cell types and which is required for inner ear and hypothalamus development. Binds to the 5'-CAAGTG-3' core sequence. May act as a stage-specific inhibitor of anf1 in the anterior neural plate during the development. The protein is Homeobox protein HMX3 (hmx3) of Xenopus laevis (African clawed frog).